The chain runs to 174 residues: Probable inosine/xanthosine triphosphatase (174 aa).

Residue Asp63 participates in Mg(2+) binding.

The protein belongs to the YjjX NTPase family. In terms of assembly, homodimer. Mg(2+) serves as cofactor. The cofactor is Mn(2+).

It carries out the reaction XTP + H2O = XDP + phosphate + H(+). The catalysed reaction is ITP + H2O = IDP + phosphate + H(+). In terms of biological role, phosphatase that hydrolyzes non-canonical purine nucleotides such as XTP and ITP to their respective diphosphate derivatives. Probably excludes non-canonical purines from DNA/RNA precursor pool, thus preventing their incorporation into DNA/RNA and avoiding chromosomal lesions. The sequence is that of Probable inosine/xanthosine triphosphatase from Methanocella arvoryzae (strain DSM 22066 / NBRC 105507 / MRE50).